Consider the following 248-residue polypeptide: Conoporin-Cn1 (248 aa).

Residues 1 to 23 (MGVQFPALKTMVTVFLLLMGNMS) form the signal peptide. The interval 45–64 (TPGSSLYGVALKDLADTSYN) is N-terminal region. 5 residues coordinate phosphocholine: G120, S138, P140, Y167, and Y171.

It belongs to the actinoporin family. Conoidea subfamily. Octamer or nonamer in membranes. Monomer in the soluble state. 9 isoforms are detected in the injectable venom, mainly corresponding to different oxidative states. As to expression, expressed by the venom duct.

The protein localises to the secreted. It is found in the nematocyst. It localises to the target cell membrane. In terms of biological role, pore-forming protein that forms pores of around 1 nm and causes cardiac stimulation and cytolysis. The polypeptide is Conoporin-Cn1 (Conus consors (Singed cone)).